The chain runs to 884 residues: Protein translocase subunit SecA (884 aa).

ATP is bound by residues Gln-88, 106 to 110 (GEGKT), and Asp-509. The tract at residues 822-884 (EQKKLKMSGA…PKKGLFANND (63 aa)) is disordered. The span at 833 to 842 (KGGEDLEETK) shows a compositional bias: basic and acidic residues. The Zn(2+) site is built by Cys-858, Cys-860, Cys-869, and His-870.

The protein belongs to the SecA family. As to quaternary structure, monomer and homodimer. Part of the essential Sec protein translocation apparatus which comprises SecA, SecYEG and auxiliary proteins SecDF-YajC and YidC. Requires Zn(2+) as cofactor.

Its subcellular location is the cell inner membrane. The protein localises to the cytoplasm. The catalysed reaction is ATP + H2O + cellular proteinSide 1 = ADP + phosphate + cellular proteinSide 2.. Its function is as follows. Part of the Sec protein translocase complex. Interacts with the SecYEG preprotein conducting channel. Has a central role in coupling the hydrolysis of ATP to the transfer of proteins into and across the cell membrane, serving as an ATP-driven molecular motor driving the stepwise translocation of polypeptide chains across the membrane. The protein is Protein translocase subunit SecA of Campylobacter hominis (strain ATCC BAA-381 / DSM 21671 / CCUG 45161 / LMG 19568 / NCTC 13146 / CH001A).